The primary structure comprises 423 residues: Histidine--tRNA ligase (423 aa).

It belongs to the class-II aminoacyl-tRNA synthetase family. Homodimer.

Its subcellular location is the cytoplasm. It catalyses the reaction tRNA(His) + L-histidine + ATP = L-histidyl-tRNA(His) + AMP + diphosphate + H(+). The chain is Histidine--tRNA ligase from Moorella thermoacetica (strain ATCC 39073 / JCM 9320).